The sequence spans 270 residues: Tryptophan synthase alpha chain (270 aa).

Catalysis depends on proton acceptor residues Glu-49 and Asp-60.

Belongs to the TrpA family. In terms of assembly, tetramer of two alpha and two beta chains.

The catalysed reaction is (1S,2R)-1-C-(indol-3-yl)glycerol 3-phosphate + L-serine = D-glyceraldehyde 3-phosphate + L-tryptophan + H2O. It participates in amino-acid biosynthesis; L-tryptophan biosynthesis; L-tryptophan from chorismate: step 5/5. The alpha subunit is responsible for the aldol cleavage of indoleglycerol phosphate to indole and glyceraldehyde 3-phosphate. In Pseudomonas fluorescens (strain ATCC BAA-477 / NRRL B-23932 / Pf-5), this protein is Tryptophan synthase alpha chain.